We begin with the raw amino-acid sequence, 207 residues long: Small ribosomal subunit protein uS4 (207 aa).

The tract at residues 31 to 55 is disordered; that stretch reads KCKLDSKPGQHGRTSGARTSDYGTQ. Positions 42–53 are enriched in polar residues; the sequence is GRTSGARTSDYG. In terms of domain architecture, S4 RNA-binding spans 97-160; the sequence is SRLDNVVYRM…KKQARIVEAL (64 aa).

The protein belongs to the universal ribosomal protein uS4 family. As to quaternary structure, part of the 30S ribosomal subunit. Contacts protein S5. The interaction surface between S4 and S5 is involved in control of translational fidelity.

In terms of biological role, one of the primary rRNA binding proteins, it binds directly to 16S rRNA where it nucleates assembly of the body of the 30S subunit. Functionally, with S5 and S12 plays an important role in translational accuracy. The sequence is that of Small ribosomal subunit protein uS4 from Burkholderia orbicola (strain MC0-3).